The chain runs to 781 residues: DNA translocase FtsK 2 (781 aa).

4 consecutive transmembrane segments (helical) span residues 24–44 (LLGE…LTIL), 74–94 (FADV…LLLL), 120–140 (AGVT…LEAI), and 170–190 (GFTG…SLFF). Residues 191-781 (HFSWLNLAEQ…NRNGNVVEEE (591 aa)) are Cytoplasmic-facing. The region spanning 414–623 (GKPVVADLAK…FQVSSKIDSR (210 aa)) is the FtsK domain. 434–439 (GSGKSV) is a binding site for ATP.

This sequence belongs to the FtsK/SpoIIIE/SftA family. In terms of assembly, homohexamer. Forms a ring that surrounds DNA.

The protein localises to the cell inner membrane. In terms of biological role, essential cell division protein that coordinates cell division and chromosome segregation. The N-terminus is involved in assembly of the cell-division machinery. The C-terminus functions as a DNA motor that moves dsDNA in an ATP-dependent manner towards the dif recombination site, which is located within the replication terminus region. Translocation stops specifically at Xer-dif sites, where FtsK interacts with the Xer recombinase, allowing activation of chromosome unlinking by recombination. FtsK orienting polar sequences (KOPS) guide the direction of DNA translocation. FtsK can remove proteins from DNA as it translocates, but translocation stops specifically at XerCD-dif site, thereby preventing removal of XerC and XerD from dif. The chain is DNA translocase FtsK 2 (ftsK2) from Ralstonia nicotianae (strain ATCC BAA-1114 / GMI1000) (Ralstonia solanacearum).